A 251-amino-acid polypeptide reads, in one-letter code: Ell1-associated factor 1 (251 aa).

2 disordered regions span residues 110 to 187 (SKTV…DMEV) and 201 to 251 (FDQE…EDED). Polar residues predominate over residues 112–123 (TVPSNAITQSDN). The span at 124-135 (SQISESKSTSQS) shows a compositional bias: low complexity. Over residues 143–157 (RRKEKELEASKDGKI) the composition is skewed to basic and acidic residues. Composition is skewed to polar residues over residues 204-220 (EFNS…TASK) and 236-251 (SSAQ…EDED). Position 247 is a phosphoserine (Ser247).

Belongs to the EAF family. As to quaternary structure, forms a stable heterodimer with ell1. Ell1-eaf1 complex interacts with RNA polymerase II.

It localises to the nucleus. Activates transcription elongation by RNA polymerase II and pyrophosphorolysis as a complex with ell1. Acts as a transcriptional transactivator of ell1 elongation activities. The polypeptide is Ell1-associated factor 1 (eaf1) (Schizosaccharomyces pombe (strain 972 / ATCC 24843) (Fission yeast)).